Reading from the N-terminus, the 412-residue chain is Putative competence-damage inducible protein (412 aa).

The protein belongs to the CinA family.

In Bacillus cereus (strain Q1), this protein is Putative competence-damage inducible protein.